We begin with the raw amino-acid sequence, 378 residues long: Acetylornithine deacetylase (378 aa).

Histidine 76 lines the Zn(2+) pocket. Residue aspartate 78 is part of the active site. Residue aspartate 108 participates in Zn(2+) binding. Glutamate 140 is a catalytic residue. The Zn(2+) site is built by glutamate 141, glutamate 165, and histidine 351.

It belongs to the peptidase M20A family. ArgE subfamily. As to quaternary structure, homodimer. The cofactor is Zn(2+). Co(2+) serves as cofactor. Requires glutathione as cofactor.

It is found in the cytoplasm. It catalyses the reaction N(2)-acetyl-L-ornithine + H2O = L-ornithine + acetate. The protein operates within amino-acid biosynthesis; L-arginine biosynthesis; L-ornithine from N(2)-acetyl-L-ornithine (linear): step 1/1. Functionally, catalyzes the hydrolysis of the amide bond of N(2)-acetylated L-amino acids. Cleaves the acetyl group from N-acetyl-L-ornithine to form L-ornithine, an intermediate in L-arginine biosynthesis pathway, and a branchpoint in the synthesis of polyamines. The chain is Acetylornithine deacetylase from Vibrio campbellii (strain ATCC BAA-1116).